A 216-amino-acid chain; its full sequence is uncharacterized protein (216 aa).

The helical transmembrane segment at 7 to 29 (ILVIFFLIFFIGFEFSDMTLAFI) threads the bilayer.

The protein resides in the membrane. This is an uncharacterized protein from Archaeoglobus fulgidus (strain ATCC 49558 / DSM 4304 / JCM 9628 / NBRC 100126 / VC-16).